The primary structure comprises 348 residues: Phosphate acyltransferase (348 aa).

Belongs to the PlsX family. In terms of assembly, homodimer. Probably interacts with PlsY.

It is found in the cytoplasm. It carries out the reaction a fatty acyl-[ACP] + phosphate = an acyl phosphate + holo-[ACP]. Its pathway is lipid metabolism; phospholipid metabolism. Its function is as follows. Catalyzes the reversible formation of acyl-phosphate (acyl-PO(4)) from acyl-[acyl-carrier-protein] (acyl-ACP). This enzyme utilizes acyl-ACP as fatty acyl donor, but not acyl-CoA. This Rhizorhabdus wittichii (strain DSM 6014 / CCUG 31198 / JCM 15750 / NBRC 105917 / EY 4224 / RW1) (Sphingomonas wittichii) protein is Phosphate acyltransferase.